Consider the following 330-residue polypeptide: tRNA (guanine-N(7)-)-methyltransferase (330 aa).

Residues 1–27 are disordered; the sequence is MSTPPAKRQKRDQYRKRAAAAANEDTG. Residues 7–18 show a composition bias toward basic residues; sequence KRQKRDQYRKRA. Residues glycine 95 and 118 to 119 contribute to the S-adenosyl-L-methionine site; that span reads EI. The interval 138–185 is disordered; it reads QNQLKNSSTTASESPAPAIPAEPATDGASPDAASTPETSNSPVPGGYQ. Residues 144 to 162 show a composition bias toward low complexity; that stretch reads SSTTASESPAPAIPAEPAT. Positions 172-185 are enriched in polar residues; sequence TPETSNSPVPGGYQ. S-adenosyl-L-methionine is bound by residues 193–194 and cysteine 213; that span reads NT. Aspartate 216 is a catalytic residue. Residue 302–304 participates in S-adenosyl-L-methionine binding; that stretch reads TEE.

This sequence belongs to the class I-like SAM-binding methyltransferase superfamily. TrmB family. In terms of assembly, forms a complex with trm82.

It is found in the nucleus. The enzyme catalyses guanosine(46) in tRNA + S-adenosyl-L-methionine = N(7)-methylguanosine(46) in tRNA + S-adenosyl-L-homocysteine. It participates in tRNA modification; N(7)-methylguanine-tRNA biosynthesis. Functionally, catalyzes the formation of N(7)-methylguanine at position 46 (m7G46) in tRNA. This chain is tRNA (guanine-N(7)-)-methyltransferase (trm8), found in Aspergillus oryzae (strain ATCC 42149 / RIB 40) (Yellow koji mold).